Reading from the N-terminus, the 456-residue chain is Probable mannan endo-1,4-beta-mannosidase F (456 aa).

A signal peptide spans 1 to 18 (MRPLSSAALLSAIGAVAA). The 36-residue stretch at 19–54 (QVGPWGQCGGQSYTGGTSCVSGWACVFLNDWYSQCQ) folds into the CBM1 domain. Residues 79–110 (STSVSATAPPSSTSSSTASVSSSTSSTPIPTS) are disordered. Residues 79–113 (STSVSATAPPSSTSSSTASVSSSTSSTPIPTSSGS) are ser-rich linker. The tract at residues 114-456 (FVKAEGLKFN…CAVIDHVSRI (343 aa)) is catalytic. Substrate is bound by residues Trp-166 and Asn-280. The Proton donor role is filled by Glu-281. Residue Tyr-356 participates in substrate binding. Residue Glu-390 is the Nucleophile of the active site. Substrate is bound at residue Trp-420.

It belongs to the glycosyl hydrolase 5 (cellulase A) family.

It is found in the secreted. It catalyses the reaction Random hydrolysis of (1-&gt;4)-beta-D-mannosidic linkages in mannans, galactomannans and glucomannans.. In terms of biological role, endo-1,4-mannanase, a crucial enzyme for depolymerization of seed galactomannans and wood galactoglucomannans. The polypeptide is Probable mannan endo-1,4-beta-mannosidase F (manF) (Neosartorya fischeri (strain ATCC 1020 / DSM 3700 / CBS 544.65 / FGSC A1164 / JCM 1740 / NRRL 181 / WB 181) (Aspergillus fischerianus)).